Consider the following 412-residue polypeptide: Glucose/galactose transporter (412 aa).

A run of 11 helical transmembrane segments spans residues 21–41 (YGFA…ITCL), 62–82 (LIQF…GQLV), 90–110 (GIVV…PAAS), 113–133 (VYAL…ILQV), 158–178 (FNSL…LSAA), 192–212 (FPYL…AILK), 239–259 (LGAI…SFLV), 310–330 (AFVA…IAMW), 331–351 (SVLA…SLAL), 363–383 (GILC…GALA), and 388–408 (IHLA…YGLI).

Belongs to the major facilitator superfamily. FHS transporter (TC 2.A.1.7) family.

The protein resides in the cell inner membrane. Intake of glucose and galactose. In Brucella abortus (strain 2308), this protein is Glucose/galactose transporter (gluP).